The following is a 709-amino-acid chain: Translation initiation factor IF-2 (709 aa).

Composition is skewed to basic and acidic residues over residues 47–70 (DHQY…EKPK) and 105–121 (KGKE…EKKL). The interval 47 to 157 (DHQYRPNTGK…QPAKKEKELP (111 aa)) is disordered. The span at 125-137 (AKKKGKGPAKGKK) shows a compositional bias: basic residues. A compositionally biased stretch (low complexity) spans 138–149 (QAAPAAKQAPQP). Residues 240–409 (ERPPVVTIMG…LLVSEMEELK (170 aa)) enclose the tr-type G domain. The tract at residues 249–256 (GHVDHGKT) is G1. 249 to 256 (GHVDHGKT) lines the GTP pocket. The interval 274–278 (GITQH) is G2. The interval 295-298 (DTPG) is G3. GTP contacts are provided by residues 295-299 (DTPGH) and 349-352 (NKID). The interval 349–352 (NKID) is G4. Residues 385-387 (SAK) are G5.

It belongs to the TRAFAC class translation factor GTPase superfamily. Classic translation factor GTPase family. IF-2 subfamily.

Its subcellular location is the cytoplasm. In terms of biological role, one of the essential components for the initiation of protein synthesis. Protects formylmethionyl-tRNA from spontaneous hydrolysis and promotes its binding to the 30S ribosomal subunits. Also involved in the hydrolysis of GTP during the formation of the 70S ribosomal complex. This is Translation initiation factor IF-2 from Geobacillus kaustophilus (strain HTA426).